The primary structure comprises 181 residues: Oligoribonuclease (181 aa).

In terms of domain architecture, Exonuclease spans 8–171 (LIWVDLEMTG…EDIKESIAEM (164 aa)). The active site involves tyrosine 129.

This sequence belongs to the oligoribonuclease family.

Its subcellular location is the cytoplasm. In terms of biological role, 3'-to-5' exoribonuclease specific for small oligoribonucleotides. In Shewanella frigidimarina (strain NCIMB 400), this protein is Oligoribonuclease.